The following is a 98-amino-acid chain: NADH-ubiquinone oxidoreductase chain 4L (98 aa).

The next 3 membrane-spanning stretches (helical) occupy residues 2 to 22 (TQAS…TLIF), 29 to 49 (TLLC…MTAL), and 61 to 81 (IVML…LAMI).

The protein belongs to the complex I subunit 4L family. In terms of assembly, core subunit of respiratory chain NADH dehydrogenase (Complex I) which is composed of 45 different subunits.

The protein resides in the mitochondrion inner membrane. The enzyme catalyses a ubiquinone + NADH + 5 H(+)(in) = a ubiquinol + NAD(+) + 4 H(+)(out). In terms of biological role, core subunit of the mitochondrial membrane respiratory chain NADH dehydrogenase (Complex I) which catalyzes electron transfer from NADH through the respiratory chain, using ubiquinone as an electron acceptor. Part of the enzyme membrane arm which is embedded in the lipid bilayer and involved in proton translocation. The polypeptide is NADH-ubiquinone oxidoreductase chain 4L (MT-ND4L) (Calomys musculinus (Drylands vesper mouse)).